The chain runs to 445 residues: Deoxyribodipyrimidine photo-lyase (445 aa).

One can recognise a Photolyase/cryptochrome alpha/beta domain in the interval 20–148 (SYVVYWMQAS…QVESNVIVPV (129 aa)). Arginine 239 contributes to the DNA binding site.

Belongs to the DNA photolyase class-2 family. The cofactor is FAD. Requires coenzyme F420-(gamma-Glu)n as cofactor.

The enzyme catalyses cyclobutadipyrimidine (in DNA) = 2 pyrimidine residues (in DNA).. In terms of biological role, involved in repair of UV radiation-induced DNA damage. Catalyzes the light-dependent monomerization (300-600 nm) of cyclobutyl pyrimidine dimers (in cis-syn configuration), which are formed between adjacent bases on the same DNA strand upon exposure to ultraviolet radiation. The protein is Deoxyribodipyrimidine photo-lyase (phr) of Methanothermobacter thermautotrophicus (strain ATCC 29096 / DSM 1053 / JCM 10044 / NBRC 100330 / Delta H) (Methanobacterium thermoautotrophicum).